A 238-amino-acid chain; its full sequence is Ubiquinone biosynthesis O-methyltransferase (238 aa).

Residues Arg39, Gly59, Asp80, and Met124 each coordinate S-adenosyl-L-methionine.

The protein belongs to the methyltransferase superfamily. UbiG/COQ3 family.

The enzyme catalyses a 3-demethylubiquinol + S-adenosyl-L-methionine = a ubiquinol + S-adenosyl-L-homocysteine + H(+). It catalyses the reaction a 3-(all-trans-polyprenyl)benzene-1,2-diol + S-adenosyl-L-methionine = a 2-methoxy-6-(all-trans-polyprenyl)phenol + S-adenosyl-L-homocysteine + H(+). It participates in cofactor biosynthesis; ubiquinone biosynthesis. Functionally, O-methyltransferase that catalyzes the 2 O-methylation steps in the ubiquinone biosynthetic pathway. This Aeromonas salmonicida (strain A449) protein is Ubiquinone biosynthesis O-methyltransferase.